Reading from the N-terminus, the 250-residue chain is Triosephosphate isomerase (250 aa).

9-11 (NWK) lines the substrate pocket. His95 (electrophile) is an active-site residue. The active-site Proton acceptor is the Glu167. Substrate-binding positions include Gly173, Ser212, and 233–234 (GG).

It belongs to the triosephosphate isomerase family. Homodimer.

Its subcellular location is the cytoplasm. The enzyme catalyses D-glyceraldehyde 3-phosphate = dihydroxyacetone phosphate. It participates in carbohydrate biosynthesis; gluconeogenesis. The protein operates within carbohydrate degradation; glycolysis; D-glyceraldehyde 3-phosphate from glycerone phosphate: step 1/1. Its function is as follows. Involved in the gluconeogenesis. Catalyzes stereospecifically the conversion of dihydroxyacetone phosphate (DHAP) to D-glyceraldehyde-3-phosphate (G3P). The polypeptide is Triosephosphate isomerase (Nitrosococcus oceani (strain ATCC 19707 / BCRC 17464 / JCM 30415 / NCIMB 11848 / C-107)).